A 331-amino-acid chain; its full sequence is MTIIVTGAAGFIGSNIVKGLNERGETNIIAVDNLTRAEKFNNLVDCEIADYLDKTDFVARFARGDFGNVRAVFHEGACSDTMETDGRYMMENNYRYTLALLEACLEQGAQFLYASSAATYGASTMFREDRDYEKPLNVYGYSKFLFDQVVRRRLPSAHSQIVGFRYFNVYGPREFHKGRMASVAFHHFNQFRAEGTVKLFGEYNGYAPGTQSRDFVSVEDVVKVNLYFLDHPEKSGIFNLGTGRSQPFNDIAVSVVNALRESEGKPALSLDEMVQEGLVEYVKFPDALRGKYQCFTQSDVSRLRGAGYSDQFLTVQEGVSRYCKWLLERSA.

Residues 11 to 12, 32 to 33, Lys-39, Lys-54, 75 to 79, and Asn-92 each bind NADP(+); these read FI, DN, and EGACS. The active-site Proton acceptor is Tyr-139. Residue Lys-143 coordinates NADP(+). A substrate-binding site is contributed by Asn-168. The NADP(+) site is built by Val-169 and Lys-177. Catalysis depends on Lys-177, which acts as the Proton acceptor. Residues Arg-179, His-186, 200–203, Arg-213, and Tyr-292 contribute to the substrate site; that span reads FGEY.

This sequence belongs to the NAD(P)-dependent epimerase/dehydratase family. HldD subfamily. Homopentamer. It depends on NADP(+) as a cofactor.

The enzyme catalyses ADP-D-glycero-beta-D-manno-heptose = ADP-L-glycero-beta-D-manno-heptose. It functions in the pathway nucleotide-sugar biosynthesis; ADP-L-glycero-beta-D-manno-heptose biosynthesis; ADP-L-glycero-beta-D-manno-heptose from D-glycero-beta-D-manno-heptose 7-phosphate: step 4/4. Its function is as follows. Catalyzes the interconversion between ADP-D-glycero-beta-D-manno-heptose and ADP-L-glycero-beta-D-manno-heptose via an epimerization at carbon 6 of the heptose. The sequence is that of ADP-L-glycero-D-manno-heptose-6-epimerase from Cupriavidus metallidurans (strain ATCC 43123 / DSM 2839 / NBRC 102507 / CH34) (Ralstonia metallidurans).